The following is a 712-amino-acid chain: Ribosomal RNA large subunit methyltransferase K/L (712 aa).

The 112-residue stretch at 46-157 (GAYQALLHSR…REKLIVSLDL (112 aa)) folds into the THUMP domain.

Belongs to the methyltransferase superfamily. RlmKL family.

It localises to the cytoplasm. It carries out the reaction guanosine(2445) in 23S rRNA + S-adenosyl-L-methionine = N(2)-methylguanosine(2445) in 23S rRNA + S-adenosyl-L-homocysteine + H(+). The catalysed reaction is guanosine(2069) in 23S rRNA + S-adenosyl-L-methionine = N(2)-methylguanosine(2069) in 23S rRNA + S-adenosyl-L-homocysteine + H(+). In terms of biological role, specifically methylates the guanine in position 2445 (m2G2445) and the guanine in position 2069 (m7G2069) of 23S rRNA. This Haemophilus ducreyi (strain 35000HP / ATCC 700724) protein is Ribosomal RNA large subunit methyltransferase K/L.